A 228-amino-acid polypeptide reads, in one-letter code: L-ribulose-5-phosphate 4-epimerase UlaF (228 aa).

Residues 26-27, 43-44, and 72-73 contribute to the substrate site; these read GN, SG, and SS. 3 residues coordinate Zn(2+): Asp74, His93, and His95. The active-site Proton donor/acceptor is the Asp118. Residue His167 coordinates Zn(2+). The Proton donor/acceptor role is filled by Tyr225.

The protein belongs to the aldolase class II family. AraD/FucA subfamily. Zn(2+) serves as cofactor.

The enzyme catalyses L-ribulose 5-phosphate = D-xylulose 5-phosphate. Its pathway is cofactor degradation; L-ascorbate degradation; D-xylulose 5-phosphate from L-ascorbate: step 4/4. Its function is as follows. Catalyzes the isomerization of L-ribulose 5-phosphate to D-xylulose 5-phosphate. Is involved in the anaerobic L-ascorbate utilization. This is L-ribulose-5-phosphate 4-epimerase UlaF from Shigella sonnei (strain Ss046).